A 342-amino-acid chain; its full sequence is Nicotinate-nucleotide--dimethylbenzimidazole phosphoribosyltransferase (342 aa).

The active-site Proton acceptor is the Glu311.

Belongs to the CobT family.

It carries out the reaction 5,6-dimethylbenzimidazole + nicotinate beta-D-ribonucleotide = alpha-ribazole 5'-phosphate + nicotinate + H(+). It participates in nucleoside biosynthesis; alpha-ribazole biosynthesis; alpha-ribazole from 5,6-dimethylbenzimidazole: step 1/2. Functionally, catalyzes the synthesis of alpha-ribazole-5'-phosphate from nicotinate mononucleotide (NAMN) and 5,6-dimethylbenzimidazole (DMB). This Shewanella sediminis (strain HAW-EB3) protein is Nicotinate-nucleotide--dimethylbenzimidazole phosphoribosyltransferase.